A 231-amino-acid polypeptide reads, in one-letter code: Large ribosomal subunit protein uL1 (231 aa).

It belongs to the universal ribosomal protein uL1 family. Part of the 50S ribosomal subunit.

Functionally, binds directly to 23S rRNA. The L1 stalk is quite mobile in the ribosome, and is involved in E site tRNA release. In terms of biological role, protein L1 is also a translational repressor protein, it controls the translation of the L11 operon by binding to its mRNA. The protein is Large ribosomal subunit protein uL1 of Alkalilimnicola ehrlichii (strain ATCC BAA-1101 / DSM 17681 / MLHE-1).